Consider the following 309-residue polypeptide: Porphobilinogen deaminase (309 aa).

Cysteine 242 is subject to S-(dipyrrolylmethanemethyl)cysteine.

The protein belongs to the HMBS family. Monomer. Dipyrromethane is required as a cofactor.

The catalysed reaction is 4 porphobilinogen + H2O = hydroxymethylbilane + 4 NH4(+). It functions in the pathway porphyrin-containing compound metabolism; protoporphyrin-IX biosynthesis; coproporphyrinogen-III from 5-aminolevulinate: step 2/4. In terms of biological role, tetrapolymerization of the monopyrrole PBG into the hydroxymethylbilane pre-uroporphyrinogen in several discrete steps. The sequence is that of Porphobilinogen deaminase from Shewanella woodyi (strain ATCC 51908 / MS32).